The following is a 493-amino-acid chain: MDYLTIILTLLFALTLYEAFSYLSRRTKNLPPGPSPLPFIGSLHLLGDQPHKSLAKLSKKHGPIMSLKLGQITTIVISSSTMAKEVLQKQDLAFSSRSVPNALHAHNQFKFSVVWLPVASRWRSLRKVLNSNIFSGNRLDANQHLRTRKVQELIAYCRKNSQSGEAVDVGRAAFRTSLNLLSNLIFSKDLTDPYSDSAKEFKDLVWNIMVEAGKPNLVDFFPLLEKVDPQGIRHRMTIHFGEVLKLFGGLVNERLEQRRSKGEKNDVLDVLLTTSQESPEEIDRTHIERMCLDLFVAGTDTTSSTLEWAMSEMLKNPDKMKKTQDELAQVIGRGKTIEESDINRLPYLRCVMKETLRIHPPVPFLIPRKVEQSVEVCGYNVPKGSQVLVNAWAIGRDETVWDDALAFKPERFMESELDIRGRDFELIPFGAGRRICPGLPLALRTVPLMLGSLLNSFNWKLEGGMAPKDLDMEEKFGITLQKAHPLRAVPSTL.

Residues 1–6 (MDYLTI) are Lumenal-facing. Residues 7–23 (ILTLLFALTLYEAFSYL) traverse the membrane as a helical segment. The Cytoplasmic segment spans residues 24 to 493 (SRRTKNLPPG…HPLRAVPSTL (470 aa)). Cys436 provides a ligand contact to heme.

It belongs to the cytochrome P450 family. Requires heme as cofactor. Expressed in roots, stems, leaves and flower buds. Hardly detected in mature flowers and fruits. Expressed in the internal phloem-associated parenchyma.

It localises to the endoplasmic reticulum membrane. It carries out the reaction (2E)-geraniol + reduced [NADPH--hemoprotein reductase] + O2 = (6E)-8-hydroxygeraniol + oxidized [NADPH--hemoprotein reductase] + H2O + H(+). In terms of biological role, hydroxylase involved in the biosynthesis of hydroxygeraniol, a precursor of the terpenoid indole alkaloids such as vinblastine and vincristine. Also able to hydroxylate in vitro nerol and to catalyze 3'-hydroxylation of the flavanone naringenin to form eriodictyol. No activity with apigenin, kaempferol, p-coumaric acid and ferulic acid as substrates. The protein is Geraniol 8-hydroxylase (CYP76B6) of Catharanthus roseus (Madagascar periwinkle).